The primary structure comprises 865 residues: MITTKELRNKFINYFESKNHSHQPSSSLIPFGDDTLLFTNAGMVQFKDVFLGIEKKDFSRAVTVQKCLRAGGKHNDLDNVGYTARHHTFFEMLGNFSFGDYFKKEAISFAWEFLTKEIKLPVEKLWVTIYASDDEAFDVWHKHIGLAKERIIRIDSSDNFWSMGDTGPCGPCTEIFYDHGEDVAGGLPGTPEQDGDRYIEIWNIVFMQYNRHADGSTTDLPKPSVDTGMGLERISAVLQNVHSNYEIDLFQALIKKAQQVTHAKDINSPSLKVIADHIRACAFLIADGVLPANEGRGYVLRRIIRRAIRHGNKVGAKEIFFYKLVAELVSQMGEAYSQLIDKRELIEKTLIKEEELFLKTIENGIKIFDAEIENLKDNTISGEVAFKLYDTYGFPFDLTADMAREKGLKVDEQAFLAQMQIQKQRSKEAGKFNVDYNSLINSQVKSEFRGYSTLIEDAKVLEIYQDGQLVASTSEQVSAVVVLDKTPFYAESGGQVGDKGILEGVGFEFVVEDVQKSGEAILHIGKLVKGRLNLNDELTARVSDKPRLATAANHSATHLLYKALKLVLGGHAEQKGSLVDENRLRFDFTHDKAISRSEIEQIELLVNQQIRANYPVTTIETSQQKAKSLGAEALFGEKYGDIVRVISMGDFSIELCGGTHVAYTGDIGLFKVTSEGSIASGVRRIEAVTADKAIRHTFTNENKIIAIKDSLKANDTNLIDKIKSMLEQIKNQEKQIAKLKKELLSGSSNDIKETSIGDIKIVVANVDGVDVKTLRNKIDDYKSKNTKVIAVLTTTNADKVQFVIGVSNALTTLIKAGDIAKELSSHIDGKGGGRADMAQGGGNNSANIDQALSQVEKFILNNIKE.

Zn(2+) contacts are provided by His-554, His-558, Cys-656, and His-660.

This sequence belongs to the class-II aminoacyl-tRNA synthetase family. Requires Zn(2+) as cofactor.

It is found in the cytoplasm. The catalysed reaction is tRNA(Ala) + L-alanine + ATP = L-alanyl-tRNA(Ala) + AMP + diphosphate. Its function is as follows. Catalyzes the attachment of alanine to tRNA(Ala) in a two-step reaction: alanine is first activated by ATP to form Ala-AMP and then transferred to the acceptor end of tRNA(Ala). Also edits incorrectly charged Ser-tRNA(Ala) and Gly-tRNA(Ala) via its editing domain. This chain is Alanine--tRNA ligase, found in Francisella tularensis subsp. holarctica (strain LVS).